The chain runs to 566 residues: Putative sulfite reductase [NADPH] hemoprotein beta-component (566 aa).

4 residues coordinate [4Fe-4S] cluster: cysteine 430, cysteine 436, cysteine 475, and cysteine 479. Cysteine 479 contacts siroheme.

This sequence belongs to the nitrite and sulfite reductase 4Fe-4S domain family. In terms of assembly, alpha(8)-beta(8). The alpha component is a flavoprotein, the beta component is a hemoprotein. The cofactor is siroheme. It depends on [4Fe-4S] cluster as a cofactor.

The catalysed reaction is hydrogen sulfide + 3 NADP(+) + 3 H2O = sulfite + 3 NADPH + 4 H(+). Its pathway is sulfur metabolism; hydrogen sulfide biosynthesis; hydrogen sulfide from sulfite (NADPH route): step 1/1. Functionally, component of the sulfite reductase complex that catalyzes the 6-electron reduction of sulfite to sulfide. This is one of several activities required for the biosynthesis of L-cysteine from sulfate. In Buchnera aphidicola subsp. Schizaphis graminum (strain Sg), this protein is Putative sulfite reductase [NADPH] hemoprotein beta-component.